Reading from the N-terminus, the 429-residue chain is Formate-dependent phosphoribosylglycinamide formyltransferase (429 aa).

N(1)-(5-phospho-beta-D-ribosyl)glycinamide-binding positions include 26–27 and Glu86; that span reads EL. Residues Arg118, Lys159, 199 to 202, and Glu207 contribute to the ATP site; that span reads EEHI. The region spanning 123-319 is the ATP-grasp domain; sequence ETLAREAKVP…EFGLHLRAVL (197 aa). Residues Glu276 and Glu288 each contribute to the Mg(2+) site. N(1)-(5-phospho-beta-D-ribosyl)glycinamide contacts are provided by residues Asp295, Lys375, and 382–383; that span reads RR.

This sequence belongs to the PurK/PurT family. As to quaternary structure, homodimer.

It catalyses the reaction N(1)-(5-phospho-beta-D-ribosyl)glycinamide + formate + ATP = N(2)-formyl-N(1)-(5-phospho-beta-D-ribosyl)glycinamide + ADP + phosphate + H(+). It functions in the pathway purine metabolism; IMP biosynthesis via de novo pathway; N(2)-formyl-N(1)-(5-phospho-D-ribosyl)glycinamide from N(1)-(5-phospho-D-ribosyl)glycinamide (formate route): step 1/1. Its function is as follows. Involved in the de novo purine biosynthesis. Catalyzes the transfer of formate to 5-phospho-ribosyl-glycinamide (GAR), producing 5-phospho-ribosyl-N-formylglycinamide (FGAR). Formate is provided by PurU via hydrolysis of 10-formyl-tetrahydrofolate. In Thermococcus kodakarensis (strain ATCC BAA-918 / JCM 12380 / KOD1) (Pyrococcus kodakaraensis (strain KOD1)), this protein is Formate-dependent phosphoribosylglycinamide formyltransferase.